The following is a 229-amino-acid chain: Uracil-DNA glycosylase (229 aa).

D67 (proton acceptor) is an active-site residue.

It belongs to the uracil-DNA glycosylase (UDG) superfamily. UNG family.

It is found in the cytoplasm. The catalysed reaction is Hydrolyzes single-stranded DNA or mismatched double-stranded DNA and polynucleotides, releasing free uracil.. In terms of biological role, excises uracil residues from the DNA which can arise as a result of misincorporation of dUMP residues by DNA polymerase or due to deamination of cytosine. The sequence is that of Uracil-DNA glycosylase from Coxiella burnetii (strain CbuG_Q212) (Coxiella burnetii (strain Q212)).